A 355-amino-acid chain; its full sequence is Double-stranded RNA-binding protein 4 (355 aa).

DRBM domains are found at residues 4 to 73 and 82 to 150; these read VYKG…SLTP and AYKN…SIKN. Positions 149–188 are enriched in polar residues; the sequence is KNGNSNQTGSPTLPSERQEDVNSNVKSSPQEIHSQPSSKV. A disordered region spans residues 149–193; that stretch reads KNGNSNQTGSPTLPSERQEDVNSNVKSSPQEIHSQPSSKVVMTPD.

In terms of assembly, heterodimer with DRB1 or DRB5. Interacts with DCL4 and cauliflower mosaic virus (CaMV) transactivator/viroplasmin protein. Interaction with CaMV transactivator/viroplasmin protein inhibits RNA silencing ability of DRB4. As to expression, expressed in roots, leaf vasculature, shoot apical meristem (SAM) and developing anthers.

The protein localises to the nucleus. Its function is as follows. Double-stranded RNA-binding protein involved in RNA-mediated post-transcriptional gene silencing (PTGS). Functions in the trans-acting small interfering RNAs (ta-siRNAs) biogenesis by binding and assisting DICER-LIKE 4 (DCL4). Required for DCL4 activity. Required for the 21 nucleotide ta-siRNAs production of the TAS3 transcript in leaves but not in flowers. Plays an important role in silencing RNA of both DNA and RNA viruses. Involved with argonaute 7 (AGO7) and RDR6 in turnip crinkle virus (TCV) silencing. May not be directly involved in viral siRNA production. May stabilize the 21 nucleotide viral siRNAs and deliver them to the RISC complex. Targeted by the viral silencing suppressor (VSR) transactivator/viroplasmin (TAV) protein of the cauliflower mosaic virus (CaMV) that inactivates DRB4 function in RNA silencing. Probably not involved in the guide strand selection from RNA duplexes. Involved in leaf morphology through its function in ta-siRNA-mediated silencing. The sequence is that of Double-stranded RNA-binding protein 4 (DBR4) from Arabidopsis thaliana (Mouse-ear cress).